The following is a 428-amino-acid chain: 3-phosphoshikimate 1-carboxyvinyltransferase (428 aa).

3-phosphoshikimate is bound by residues lysine 21, serine 22, and arginine 26. Lysine 21 contacts phosphoenolpyruvate. Phosphoenolpyruvate-binding residues include glycine 91 and arginine 119. 3-phosphoshikimate-binding residues include serine 164, glutamine 166, aspartate 311, and lysine 338. Residue glutamine 166 participates in phosphoenolpyruvate binding. The active-site Proton acceptor is the aspartate 311. Phosphoenolpyruvate contacts are provided by arginine 342 and arginine 383.

This sequence belongs to the EPSP synthase family. In terms of assembly, monomer.

The protein localises to the cytoplasm. The catalysed reaction is 3-phosphoshikimate + phosphoenolpyruvate = 5-O-(1-carboxyvinyl)-3-phosphoshikimate + phosphate. It participates in metabolic intermediate biosynthesis; chorismate biosynthesis; chorismate from D-erythrose 4-phosphate and phosphoenolpyruvate: step 6/7. Functionally, catalyzes the transfer of the enolpyruvyl moiety of phosphoenolpyruvate (PEP) to the 5-hydroxyl of shikimate-3-phosphate (S3P) to produce enolpyruvyl shikimate-3-phosphate and inorganic phosphate. The chain is 3-phosphoshikimate 1-carboxyvinyltransferase from Campylobacter concisus (strain 13826).